The primary structure comprises 146 residues: Hemoglobin subunit beta-1/2 (146 aa).

Position 1 is an N-acetylvaline (valine 1). In terms of domain architecture, Globin spans 2-146 (HLTPDEKNAV…VATALAHKYH (145 aa)). Serine 44 is modified (phosphoserine). Position 59 is an N6-acetyllysine (lysine 59). Residues histidine 63 and histidine 92 each coordinate heme b. Position 93 is an S-nitrosocysteine (cysteine 93). Lysine 144 is subject to N6-acetyllysine.

The protein belongs to the globin family. Heterotetramer of two alpha chains and two beta chains. Red blood cells.

Functionally, involved in oxygen transport from the lung to the various peripheral tissues. The chain is Hemoglobin subunit beta-1/2 (HBB) from Otolemur crassicaudatus (Brown greater galago).